A 256-amino-acid polypeptide reads, in one-letter code: MSVLIEIHQFPCLNDNYGYLVHEPGSGRTIAIDTPDAAVYLAEAEKMSWTISEIWNTHWHPDHAGGNLKIKEATGCKIIGPAGEADKIPGIDRRVKGGDTVELGGATATVIDVPGHTLGHIAFHFPDQEAAFVGDAVFALGCGRVFEGTMEMMWESLKRIKKLPKKTQLYCAHEYTASNAKFAVTIEPENKALKEYVAWIEKRRAEDKPTVPALLERELETNPFLRADLPEMQLAMGHAGNAAATFGEIRGRKDRF.

His-58, His-60, Asp-62, His-63, His-116, Asp-135, and His-173 together coordinate Zn(2+).

It belongs to the metallo-beta-lactamase superfamily. Glyoxalase II family. In terms of assembly, monomer. It depends on Zn(2+) as a cofactor.

It catalyses the reaction an S-(2-hydroxyacyl)glutathione + H2O = a 2-hydroxy carboxylate + glutathione + H(+). It participates in secondary metabolite metabolism; methylglyoxal degradation; (R)-lactate from methylglyoxal: step 2/2. Thiolesterase that catalyzes the hydrolysis of S-D-lactoyl-glutathione to form glutathione and D-lactic acid. This chain is Hydroxyacylglutathione hydrolase, found in Hyphomonas neptunium (strain ATCC 15444).